A 160-amino-acid chain; its full sequence is 2-C-methyl-D-erythritol 2,4-cyclodiphosphate synthase (160 aa).

Asp11 and His13 together coordinate a divalent metal cation. Residues 11–13 and 37–38 each bind 4-CDP-2-C-methyl-D-erythritol 2-phosphate; these read DVH and HS. Residue His45 participates in a divalent metal cation binding. 4-CDP-2-C-methyl-D-erythritol 2-phosphate is bound by residues 59–61 and Arg145; that span reads DIG.

It belongs to the IspF family. Homotrimer. A divalent metal cation serves as cofactor.

It catalyses the reaction 4-CDP-2-C-methyl-D-erythritol 2-phosphate = 2-C-methyl-D-erythritol 2,4-cyclic diphosphate + CMP. Its pathway is isoprenoid biosynthesis; isopentenyl diphosphate biosynthesis via DXP pathway; isopentenyl diphosphate from 1-deoxy-D-xylulose 5-phosphate: step 4/6. Involved in the biosynthesis of isopentenyl diphosphate (IPP) and dimethylallyl diphosphate (DMAPP), two major building blocks of isoprenoid compounds. Catalyzes the conversion of 4-diphosphocytidyl-2-C-methyl-D-erythritol 2-phosphate (CDP-ME2P) to 2-C-methyl-D-erythritol 2,4-cyclodiphosphate (ME-CPP) with a corresponding release of cytidine 5-monophosphate (CMP). This is 2-C-methyl-D-erythritol 2,4-cyclodiphosphate synthase from Neisseria gonorrhoeae (strain ATCC 700825 / FA 1090).